A 143-amino-acid chain; its full sequence is Large ribosomal subunit protein uL13 (143 aa).

It belongs to the universal ribosomal protein uL13 family. Part of the 50S ribosomal subunit.

Its function is as follows. This protein is one of the early assembly proteins of the 50S ribosomal subunit, although it is not seen to bind rRNA by itself. It is important during the early stages of 50S assembly. The polypeptide is Large ribosomal subunit protein uL13 (Chloroflexus aggregans (strain MD-66 / DSM 9485)).